We begin with the raw amino-acid sequence, 200 residues long: ADP-ribosylation factor-like protein 4A (200 aa).

Glycine 2 carries the N-myristoyl glycine lipid modification. GTP-binding positions include 27–34 (GLDCAGKT), 75–79 (DVGGQ), and 134–137 (NKQD).

The protein belongs to the small GTPase superfamily. Arf family. In terms of assembly, interacts with CYTH2. Interacts with KPNA2; the interaction is direct. Does not interact with ARL4A. Myristoylated.

It localises to the cell membrane. The protein resides in the cytoplasm. The protein localises to the nucleus. Its subcellular location is the nucleolus. In terms of biological role, small GTP-binding protein which cycles between an inactive GDP-bound and an active GTP-bound form, and the rate of cycling is regulated by guanine nucleotide exchange factors (GEF) and GTPase-activating proteins (GAP). GTP-binding protein that does not act as an allosteric activator of the cholera toxin catalytic subunit. Recruits CYTH1, CYTH2, CYTH3 and CYTH4 to the plasma membrane in GDP-bound form. The protein is ADP-ribosylation factor-like protein 4A (ARL4A) of Homo sapiens (Human).